The sequence spans 403 residues: Aurora kinase A (403 aa).

The segment at M1–K125 is disordered. Polar residues-rich tracts occupy residues V27 to S83 and P91 to P101. Residues S41 and S51 each carry the phosphoserine modification. Residues L114–K125 show a composition bias toward basic and acidic residues. One can recognise a Protein kinase domain in the interval F133–I383. ATP contacts are provided by residues K143, K162, and E211–A213. Catalysis depends on D256, which acts as the Proton acceptor. Residue K258 forms a Glycyl lysine isopeptide (Lys-Gly) (interchain with G-Cter in SUMO2) linkage. Residues E260–N261 and D274 each bind ATP. Residues H280 to L293 are activation segment. Phosphothreonine occurs at positions 287 and 288. Residue S342 is modified to Phosphoserine; by PKA and PAK.

Belongs to the protein kinase superfamily. Ser/Thr protein kinase family. Aurora subfamily. Part of a complex composed of NEDD9, AURKA and CTTN; within the complex NEDD9 acts as a scaffold protein and is required for complex formation. Identified in a complex with AUNIP and NIN. Interacts with FBXL7. Interacts with CPEB1, JTB, TACC1, TPX2, PPP2CA, as well as with the protein phosphatase type 1 (PP1) isoforms PPP1CA, PPP1CB and PPP1CC. Also interacts with its substrates ARHGEF2, BORA, KIF2A, PARD3, and p53/TP53. Interaction with BORA promotes phosphorylation of PLK1. Interacts with CIMAP3. Interacts with GADD45A, competing with its oligomerization. Interacts (via C-terminus) with AUNIP (via C-terminus). Interacts with FRY; this interaction facilitates AURKA-mediated PLK1 phosphorylation. Interacts with SIRT2. Interacts with MYCN; interaction is phospho-independent and triggers AURKA activation; AURKA competes with FBXW7 for binding to unphosphorylated MYCN but not for binding to phosphorylated MYCN. Interacts with HNRNPU. Interacts with AAAS. Interacts with KLHL18 and CUL3. Interacts with FOXP1. Interacts with HDAC6; AURKA-mediated phosphorylation of HDAC6 promotes deacetylation of alpha-tubulin. Activated by phosphorylation at Thr-288; this brings about a change in the conformation of the activation segment. Phosphorylation at Thr-288 varies during the cell cycle and is highest during M phase. Autophosphorylated at Thr-288 upon TPX2 binding. Thr-288 can be phosphorylated by several kinases, including PAK and PKA. Protein phosphatase type 1 (PP1) binds AURKA and inhibits its activity by dephosphorylating Thr-288 during mitosis. Phosphorylation at Ser-342 decreases the kinase activity. PPP2CA controls degradation by dephosphorylating Ser-51 at the end of mitosis. Post-translationally, ubiquitinated by the E3 ubiquitin-protein ligase complex SCF(FBXL7) during mitosis, leading to its degradation by the proteasome. Ubiquitinated by CHFR, leading to its degradation by the proteasome. Ubiquitinated by the anaphase-promoting complex (APC), leading to its degradation by the proteasome. Ubiquitinated by the CUL3-KLHL18 ligase leading to its activation at the centrosome which is required for initiating mitotic entry. Ubiquitination mediated by CUL3-KLHL18 ligase does not lead to its degradation by the proteasome. In terms of tissue distribution, highly expressed in testis and weakly in skeletal muscle, thymus and spleen. Also highly expressed in colon, ovarian, prostate, neuroblastoma, breast and cervical cancer cell lines.

The protein localises to the cytoplasm. The protein resides in the cytoskeleton. It is found in the microtubule organizing center. Its subcellular location is the centrosome. It localises to the spindle pole. The protein localises to the centriole. The protein resides in the cell projection. It is found in the neuron projection. Its subcellular location is the cilium. It localises to the cilium basal body. The protein localises to the basolateral cell membrane. The enzyme catalyses L-seryl-[protein] + ATP = O-phospho-L-seryl-[protein] + ADP + H(+). The catalysed reaction is L-threonyl-[protein] + ATP = O-phospho-L-threonyl-[protein] + ADP + H(+). Activation of CDK1, appears to be an upstream event of AURKA activation. Phosphatase inhibitor-2 (PPP1R2) and TPX2 act also as activators. Inactivated by the G2 checkpoint. Inhibited by GADD45A and p53/TP53, and through dephosphorylation by protein phosphatase type 1 (PP1). MLN8054 is also a potent and selective inhibitor. Activated during the early phase of cilia disassembly in the presence of CIMAP3. Inhibited by the small molecule inhibitor VX-680. Functionally, mitotic serine/threonine kinase that contributes to the regulation of cell cycle progression. Associates with the centrosome and the spindle microtubules during mitosis and plays a critical role in various mitotic events including the establishment of mitotic spindle, centrosome duplication, centrosome separation as well as maturation, chromosomal alignment, spindle assembly checkpoint, and cytokinesis. Required for normal spindle positioning during mitosis and for the localization of NUMA1 and DCTN1 to the cell cortex during metaphase. Required for initial activation of CDK1 at centrosomes. Phosphorylates numerous target proteins, including ARHGEF2, BORA, BRCA1, CDC25B, DLGP5, HDAC6, KIF2A, LATS2, NDEL1, PARD3, PPP1R2, PLK1, RASSF1, TACC3, p53/TP53 and TPX2. Phosphorylates MCRS1 which is required for MCRS1-mediated kinetochore fiber assembly and mitotic progression. Regulates KIF2A tubulin depolymerase activity. Important for microtubule formation and/or stabilization. Required for normal axon formation. Plays a role in microtubule remodeling during neurite extension. Also acts as a key regulatory component of the p53/TP53 pathway, and particularly the checkpoint-response pathways critical for oncogenic transformation of cells, by phosphorylating and destabilizing p53/TP53. Phosphorylates its own inhibitors, the protein phosphatase type 1 (PP1) isoforms, to inhibit their activity. Inhibits cilia outgrowth. Required for cilia disassembly via phosphorylation of HDAC6 and subsequent deacetylation of alpha-tubulin. Regulates protein levels of the anti-apoptosis protein BIRC5 by suppressing the expression of the SCF(FBXL7) E3 ubiquitin-protein ligase substrate adapter FBXL7 through the phosphorylation of the transcription factor FOXP1. The chain is Aurora kinase A from Homo sapiens (Human).